The following is an 84-amino-acid chain: Large ribosomal subunit protein bL27 (84 aa).

The tract at residues 1–21 (MAHKKGASSTRNGRDSNAQRL) is disordered. Residues 7–19 (ASSTRNGRDSNAQ) show a composition bias toward polar residues.

This sequence belongs to the bacterial ribosomal protein bL27 family.

This chain is Large ribosomal subunit protein bL27, found in Clavibacter sepedonicus (Clavibacter michiganensis subsp. sepedonicus).